Consider the following 349-residue polypeptide: Cdc42 effector protein 4 (349 aa).

Lys-5 carries the post-translational modification N6-methyllysine. Position 18 is a phosphoserine (Ser-18). In terms of domain architecture, CRIB spans 27 to 41 (ISAPLGDFRHTMHVG). Ser-64, Ser-103, Ser-107, and Ser-116 each carry phosphoserine. Residues 123 to 132 (KEAAEKDSSK) are compositionally biased toward basic and acidic residues. Disordered stretches follow at residues 123–172 (KEAA…LLDE), 220–240 (QWGS…GPSS), and 278–349 (GWAV…EIRV). Phosphoserine is present on residues Ser-136, Ser-138, Ser-140, Ser-154, Ser-165, Ser-223, Ser-285, and Ser-288. The segment covering 280 to 308 (AVVAPSPSSARSVGSHTTRDSSSLSSYTS) has biased composition (low complexity). The segment covering 311–322 (LEERSPAFRGPD) has biased composition (basic and acidic residues). Residues 338–349 (FMDEEEEDEIRV) show a composition bias toward acidic residues.

This sequence belongs to the BORG/CEP family. In terms of assembly, interacts with CDC42 and RHOQ, in a GTP-dependent manner. In terms of tissue distribution, ubiquitous.

The protein localises to the endomembrane system. The protein resides in the cytoplasm. Its subcellular location is the cytoskeleton. Probably involved in the organization of the actin cytoskeleton. May act downstream of CDC42 to induce actin filament assembly leading to cell shape changes. Induces pseudopodia formation, when overexpressed in fibroblasts. This chain is Cdc42 effector protein 4 (Cdc42ep4), found in Mus musculus (Mouse).